The chain runs to 288 residues: 4-diphosphocytidyl-2-C-methyl-D-erythritol kinase (288 aa).

The active site involves Lys-8. An ATP-binding site is contributed by 90–100 (PVGAGLAGGSS). The active site involves Asp-132.

This sequence belongs to the GHMP kinase family. IspE subfamily.

It catalyses the reaction 4-CDP-2-C-methyl-D-erythritol + ATP = 4-CDP-2-C-methyl-D-erythritol 2-phosphate + ADP + H(+). It functions in the pathway isoprenoid biosynthesis; isopentenyl diphosphate biosynthesis via DXP pathway; isopentenyl diphosphate from 1-deoxy-D-xylulose 5-phosphate: step 3/6. In terms of biological role, catalyzes the phosphorylation of the position 2 hydroxy group of 4-diphosphocytidyl-2C-methyl-D-erythritol. The protein is 4-diphosphocytidyl-2-C-methyl-D-erythritol kinase of Chlamydia trachomatis serovar D (strain ATCC VR-885 / DSM 19411 / UW-3/Cx).